The sequence spans 249 residues: Metallo-beta-lactamase type 2 (249 aa).

Residues 1 to 18 (MKTVFILISMLFPVAVMA) form the signal peptide. 5 residues coordinate Zn(2+): His99, His101, Asp103, His162, and Cys181. Positions 184 and 193 each coordinate substrate. His223 contributes to the Zn(2+) binding site.

This sequence belongs to the metallo-beta-lactamase superfamily. Class-B beta-lactamase family. Monomer. Zn(2+) serves as cofactor.

It is found in the periplasm. The enzyme catalyses a beta-lactam + H2O = a substituted beta-amino acid. With respect to regulation, competitively inhibited by 4-morpholineethanesulfonic acid (MES), SB236050 and biphenyl tetrazoles (BPTs). Also inhibited by chelating agents such as EDTA and 1,10-phenanthroline. CcrA is not susceptible to inactivation by the beta-lactamase-blocking agents clavulanic acid or tazobactam. Functionally, confers resistance to the different beta-lactams antibiotics (penicillin, cephalosporin and carbapenem) via the hydrolysis of the beta-lactam ring. This is Metallo-beta-lactamase type 2 from Bacteroides fragilis.